A 107-amino-acid chain; its full sequence is Ribonuclease P protein component 4 (107 aa).

Cys-66, Cys-69, Cys-92, and Cys-95 together coordinate Zn(2+).

Belongs to the eukaryotic/archaeal RNase P protein component 4 family. In terms of assembly, consists of a catalytic RNA component and at least 4-5 protein subunits. Zn(2+) serves as cofactor.

It is found in the cytoplasm. The enzyme catalyses Endonucleolytic cleavage of RNA, removing 5'-extranucleotides from tRNA precursor.. In terms of biological role, part of ribonuclease P, a protein complex that generates mature tRNA molecules by cleaving their 5'-ends. This Methanosarcina acetivorans (strain ATCC 35395 / DSM 2834 / JCM 12185 / C2A) protein is Ribonuclease P protein component 4.